A 97-amino-acid chain; its full sequence is Eclosion hormone (97 aa).

Residues Met-1 to Cys-17 form the signal peptide. 3 cysteine pairs are disulfide-bonded: Cys-48-Cys-72, Cys-52-Cys-68, and Cys-55-Cys-83.

Belongs to the insect eclosion hormone family. As to expression, expressed in a single pair of brain neurons which extend their processes the entire length of the central nervous system and also to the corpora cardiaca portion of the ring gland. These cells show massive depletion of immunoreactive Eh at ecdysis.

It localises to the secreted. Its function is as follows. Neuropeptide that triggers the performance of ecdysis behaviors at the end of a molt. It triggers adult behavior patterns: larval, pupal and adult ecdysis, and plasticization during the molt. In Drosophila melanogaster (Fruit fly), this protein is Eclosion hormone (Eh).